The sequence spans 219 residues: Dephospho-CoA kinase (219 aa).

The DPCK domain maps to 8–215 (LVGVTGGIGS…EAAASGPDCQ (208 aa)). Position 16–21 (16–21 (GSGKST)) interacts with ATP.

It belongs to the CoaE family.

The protein localises to the cytoplasm. It carries out the reaction 3'-dephospho-CoA + ATP = ADP + CoA + H(+). Its pathway is cofactor biosynthesis; coenzyme A biosynthesis; CoA from (R)-pantothenate: step 5/5. Functionally, catalyzes the phosphorylation of the 3'-hydroxyl group of dephosphocoenzyme A to form coenzyme A. This chain is Dephospho-CoA kinase, found in Chlorobium luteolum (strain DSM 273 / BCRC 81028 / 2530) (Pelodictyon luteolum).